Consider the following 380-residue polypeptide: Probable dual-specificity RNA methyltransferase RlmN (380 aa).

E112 (proton acceptor) is an active-site residue. The Radical SAM core domain occupies 118–358; the sequence is YPDRVTACLS…TTVRDTRGRE (241 aa). C125 and C363 are oxidised to a cystine. 3 residues coordinate [4Fe-4S] cluster: C132, C136, and C139. S-adenosyl-L-methionine is bound by residues 187-188, S221, 244-246, and N320; these read GE and SLH. C363 (S-methylcysteine intermediate) is an active-site residue.

This sequence belongs to the radical SAM superfamily. RlmN family. Requires [4Fe-4S] cluster as cofactor.

It localises to the cytoplasm. It carries out the reaction adenosine(2503) in 23S rRNA + 2 reduced [2Fe-2S]-[ferredoxin] + 2 S-adenosyl-L-methionine = 2-methyladenosine(2503) in 23S rRNA + 5'-deoxyadenosine + L-methionine + 2 oxidized [2Fe-2S]-[ferredoxin] + S-adenosyl-L-homocysteine. It catalyses the reaction adenosine(37) in tRNA + 2 reduced [2Fe-2S]-[ferredoxin] + 2 S-adenosyl-L-methionine = 2-methyladenosine(37) in tRNA + 5'-deoxyadenosine + L-methionine + 2 oxidized [2Fe-2S]-[ferredoxin] + S-adenosyl-L-homocysteine. Functionally, specifically methylates position 2 of adenine 2503 in 23S rRNA and position 2 of adenine 37 in tRNAs. The sequence is that of Probable dual-specificity RNA methyltransferase RlmN from Salinispora arenicola (strain CNS-205).